A 244-amino-acid polypeptide reads, in one-letter code: Octanoyltransferase (244 aa).

The disordered stretch occupies residues 1–21 (MDKKLHSVSPESGPNSNLDLT). Residues 9–21 (SPESGPNSNLDLT) show a composition bias toward polar residues. A BPL/LPL catalytic domain is found at 59-244 (PFSPQAVWLL…LNWEKINQSL (186 aa)). Substrate is bound by residues 101-108 (RGGEVTHH), 168-170 (SIG), and 181-183 (GFS). The active-site Acyl-thioester intermediate is cysteine 199.

The protein belongs to the LipB family.

Its subcellular location is the cytoplasm. The catalysed reaction is octanoyl-[ACP] + L-lysyl-[protein] = N(6)-octanoyl-L-lysyl-[protein] + holo-[ACP] + H(+). Its pathway is protein modification; protein lipoylation via endogenous pathway; protein N(6)-(lipoyl)lysine from octanoyl-[acyl-carrier-protein]: step 1/2. Functionally, catalyzes the transfer of endogenously produced octanoic acid from octanoyl-acyl-carrier-protein onto the lipoyl domains of lipoate-dependent enzymes. Lipoyl-ACP can also act as a substrate although octanoyl-ACP is likely to be the physiological substrate. The sequence is that of Octanoyltransferase from Prochlorococcus marinus (strain NATL1A).